Here is a 406-residue protein sequence, read N- to C-terminus: Dual-specificity RNA methyltransferase RlmN (406 aa).

Glu119 serves as the catalytic Proton acceptor. Residues 125–370 (DKGRGTLCVS…AMVRRTRGDD (246 aa)) form the Radical SAM core domain. A disulfide bond links Cys132 and Cys375. Positions 139, 143, and 146 each coordinate [4Fe-4S] cluster. S-adenosyl-L-methionine contacts are provided by residues 192–193 (GE), Ser224, 246–248 (SLH), and Asn332. Cys375 functions as the S-methylcysteine intermediate in the catalytic mechanism.

This sequence belongs to the radical SAM superfamily. RlmN family. Requires [4Fe-4S] cluster as cofactor.

Its subcellular location is the cytoplasm. It carries out the reaction adenosine(2503) in 23S rRNA + 2 reduced [2Fe-2S]-[ferredoxin] + 2 S-adenosyl-L-methionine = 2-methyladenosine(2503) in 23S rRNA + 5'-deoxyadenosine + L-methionine + 2 oxidized [2Fe-2S]-[ferredoxin] + S-adenosyl-L-homocysteine. It catalyses the reaction adenosine(37) in tRNA + 2 reduced [2Fe-2S]-[ferredoxin] + 2 S-adenosyl-L-methionine = 2-methyladenosine(37) in tRNA + 5'-deoxyadenosine + L-methionine + 2 oxidized [2Fe-2S]-[ferredoxin] + S-adenosyl-L-homocysteine. Specifically methylates position 2 of adenine 2503 in 23S rRNA and position 2 of adenine 37 in tRNAs. m2A2503 modification seems to play a crucial role in the proofreading step occurring at the peptidyl transferase center and thus would serve to optimize ribosomal fidelity. The sequence is that of Dual-specificity RNA methyltransferase RlmN from Xylella fastidiosa (strain 9a5c).